Reading from the N-terminus, the 479-residue chain is mRNA export factor ICP27 homolog (479 aa).

The segment covering 1-15 (MVPSQRLSRTSSISS) has biased composition (low complexity). Disordered regions lie at residues 1–77 (MVPS…PSSV) and 91–210 (KKWD…NKPW). A compositionally biased stretch (acidic residues) spans 35-44 (TDCDLDPMEG). A nuclear export signal and interaction with host NXF1 region spans residues 61–146 (DEDPTPAHAI…TDESYGKRRH (86 aa)). A nuclear localization signal region spans residues 127 to 130 (KRRR). Over residues 132–142 (EVHGCTDESYG) the composition is skewed to basic and acidic residues. The interval 143-145 (KRR) is nuclear localization signal. Cysteine 354, histidine 445, cysteine 449, and cysteine 454 together coordinate Zn(2+). A CHC2-type zinc finger spans residues 354–454 (CFLPNTRDYN…HTRDCRSASC (101 aa)).

This sequence belongs to the HHV-1 ICP27 protein family. In terms of assembly, interacts with host XPO1 and with the XPO1 export pathway components small GTPase RAN and nucleoporin NUP214. Interacts with host SPEN, OTT1 and OTT3. Interacts with host SRSF1, SRSF3, SRSF7 and SRPK1. Interacts with host DHX9; this interaction may have an inhibitory effect on virion production. Interacts (via N-terminus) with host NXF1; this interaction plays a role in mRNA export. Post-translationally, phosphorylated by cellular protein kinase CK2.

It localises to the host nucleus. It is found in the host cytoplasm. Functionally, promotes the nuclear export of a subset of early and late viral mRNAs by interacting with mRNAs and cellular export proteins. Additionally may prevent the establishment of cellular antiviral state, by acting as an alternative splicing factor for cellular RNAs such as STAT1, resulting in a STAT1 mRNA incapable of producing the STAT1alpha isoform. The polypeptide is mRNA export factor ICP27 homolog (Homo sapiens (Human)).